Reading from the N-terminus, the 24-residue chain is Ascaphin-5 (24 aa).

Expressed by the skin glands.

Its subcellular location is the secreted. In terms of biological role, antimicrobial peptide. Synthetic peptide shows higher potency against Gram-negative bacteria than against Gram-positive bacteria. Has a very week hemolytic activity. The sequence is that of Ascaphin-5 from Ascaphus truei (Coastal tailed frog).